The sequence spans 156 residues: MKCPKCNSTHSRVVDSRHADEANAIRRRRECENCGTRFTTFEHIEVSPLIVVKKDGTREQFLREKILNGLVRSCEKRPVRYQQLEDITNKVEWQLRDEGQTEISSREIGEHVMNLLMHVDQVSYVRFASVYKEFKDVDQLLESMQGILSDNKRSDK.

A zinc finger spans residues 3–34; that stretch reads CPKCNSTHSRVVDSRHADEANAIRRRRECENC. The region spanning 49–139 is the ATP-cone domain; sequence LIVVKKDGTR…VYKEFKDVDQ (91 aa).

Belongs to the NrdR family. Zn(2+) is required as a cofactor.

Functionally, negatively regulates transcription of bacterial ribonucleotide reductase nrd genes and operons by binding to NrdR-boxes. The polypeptide is Transcriptional repressor NrdR (Staphylococcus epidermidis (strain ATCC 35984 / DSM 28319 / BCRC 17069 / CCUG 31568 / BM 3577 / RP62A)).